Consider the following 151-residue polypeptide: Probable transcriptional regulator syrB3 (151 aa).

A disordered region spans residues 1–65; it reads MVDESNAGPV…QERSEKLRLI (65 aa). Over residues 7 to 23 the composition is skewed to low complexity; it reads AGPVAPAVVADAEVKAP. Over residues 52 to 65 the composition is skewed to basic and acidic residues; sequence GYSEQERSEKLRLI.

It belongs to the SyrB family.

This is Probable transcriptional regulator syrB3 (syrB3) from Rhizobium meliloti (strain 1021) (Ensifer meliloti).